Reading from the N-terminus, the 156-residue chain is Small ribosomal subunit protein uS7 (156 aa).

This sequence belongs to the universal ribosomal protein uS7 family. In terms of assembly, part of the 30S ribosomal subunit. Contacts proteins S9 and S11.

Its function is as follows. One of the primary rRNA binding proteins, it binds directly to 16S rRNA where it nucleates assembly of the head domain of the 30S subunit. Is located at the subunit interface close to the decoding center, probably blocks exit of the E-site tRNA. In Magnetococcus marinus (strain ATCC BAA-1437 / JCM 17883 / MC-1), this protein is Small ribosomal subunit protein uS7.